A 313-amino-acid chain; its full sequence is Putative S-adenosyl-L-methionine-dependent methyltransferase MUL_0706 (313 aa).

Residues Asp132 and 161–162 (DL) contribute to the S-adenosyl-L-methionine site.

Belongs to the UPF0677 family.

In terms of biological role, exhibits S-adenosyl-L-methionine-dependent methyltransferase activity. The chain is Putative S-adenosyl-L-methionine-dependent methyltransferase MUL_0706 from Mycobacterium ulcerans (strain Agy99).